Reading from the N-terminus, the 90-residue chain is Bombyxin B-6 (90 aa).

An N-terminal signal peptide occupies residues Met1 to Ser20. 3 cysteine pairs are disulfide-bonded: Cys30–Cys76, Cys42–Cys89, and Cys75–Cys80. A propeptide spans Gly49–Gly67 (c peptide like).

The protein belongs to the insulin family. Heterodimer of a B chain and an A chain linked by two disulfide bonds.

Its subcellular location is the secreted. In terms of biological role, brain peptide responsible for activation of prothoracic glands to produce ecdysone in insects. This Bombyx mori (Silk moth) protein is Bombyxin B-6 (BBXB6).